The following is a 456-amino-acid chain: tRNA(Ile)-lysidine synthase (456 aa).

ATP is bound at residue 28-33 (SGGSDS).

It belongs to the tRNA(Ile)-lysidine synthase family.

The protein resides in the cytoplasm. The catalysed reaction is cytidine(34) in tRNA(Ile2) + L-lysine + ATP = lysidine(34) in tRNA(Ile2) + AMP + diphosphate + H(+). Functionally, ligates lysine onto the cytidine present at position 34 of the AUA codon-specific tRNA(Ile) that contains the anticodon CAU, in an ATP-dependent manner. Cytidine is converted to lysidine, thus changing the amino acid specificity of the tRNA from methionine to isoleucine. The polypeptide is tRNA(Ile)-lysidine synthase (Brucella anthropi (strain ATCC 49188 / DSM 6882 / CCUG 24695 / JCM 21032 / LMG 3331 / NBRC 15819 / NCTC 12168 / Alc 37) (Ochrobactrum anthropi)).